Here is a 230-residue protein sequence, read N- to C-terminus: CASP-like protein 2A2 (230 aa).

Residues 1 to 23 (MEKKDEGNPPMAVMGSRDENEDV) form a disordered region. The Cytoplasmic portion of the chain corresponds to 1-29 (MEKKDEGNPPMAVMGSRDENEDVKSTMRT). Residues 30 to 50 (AETMLRLVPVALCVSALVVML) traverse the membrane as a helical segment. Residues 51–71 (KNTQTNDYGSLSYSDLGAFRY) are Extracellular-facing. Residues 72–92 (LVNANGICAGYSLLSAVIVAM) traverse the membrane as a helical segment. Topologically, residues 93–100 (PRAWTMPQ) are cytoplasmic. Residues 101 to 121 (AWTFFLLDQVLTYVILAAGTV) traverse the membrane as a helical segment. The Extracellular segment spans residues 122 to 151 (STEVLYLANKGDTSIAWSAACASFGGFCHK). Residues 152–172 (ALISTVITFVAVIFYAALSLV) form a helical membrane-spanning segment. Topologically, residues 173 to 230 (SSYKLFSKYDAPVVTQSGEGIKTVTLGSPPPPPPPPPSNLHLHLHAKLACPAHNNSPN) are cytoplasmic.

The protein belongs to the Casparian strip membrane proteins (CASP) family. Homodimer and heterodimers.

The protein localises to the cell membrane. The sequence is that of CASP-like protein 2A2 from Populus trichocarpa (Western balsam poplar).